Consider the following 129-residue polypeptide: Small ribosomal subunit protein uS11 (129 aa).

This sequence belongs to the universal ribosomal protein uS11 family. Part of the 30S ribosomal subunit. Interacts with proteins S7 and S18. Binds to IF-3.

Located on the platform of the 30S subunit, it bridges several disparate RNA helices of the 16S rRNA. Forms part of the Shine-Dalgarno cleft in the 70S ribosome. In Serratia proteamaculans (strain 568), this protein is Small ribosomal subunit protein uS11.